The chain runs to 172 residues: MTEAVSNFEAPPMSRRVFLNALLSSSVGVVVVGTLYPVVKYFIPPSSGGAGEGVIAQDALGKPISVSELLATHAATDRVLAQGLKGDPTYIVIDNGAVANYGLNAVCTHLGCVVPWNAGENLFKCPCHGSQYAANGKVIRGPAPRSLELVSATVDGDNVRFSPWQGPDFREA.

A helical transmembrane segment spans residues 17 to 39 (VFLNALLSSSVGVVVVGTLYPVV). The Rieske domain maps to 61–161 (GKPISVSELL…ATVDGDNVRF (101 aa)). Residues cysteine 107, histidine 109, cysteine 125, and histidine 128 each coordinate [2Fe-2S] cluster. Cysteine 112 and cysteine 127 are disulfide-bonded.

It belongs to the Rieske iron-sulfur protein family. In terms of assembly, the 4 large subunits of the cytochrome b6-f complex are cytochrome b6, subunit IV (17 kDa polypeptide, PetD), cytochrome f and the Rieske protein, while the 4 small subunits are PetG, PetL, PetM and PetN. The complex functions as a dimer. The cofactor is [2Fe-2S] cluster.

The protein localises to the cellular thylakoid membrane. The enzyme catalyses 2 oxidized [plastocyanin] + a plastoquinol + 2 H(+)(in) = 2 reduced [plastocyanin] + a plastoquinone + 4 H(+)(out). In terms of biological role, component of the cytochrome b6-f complex, which mediates electron transfer between photosystem II (PSII) and photosystem I (PSI), cyclic electron flow around PSI, and state transitions. The polypeptide is Cytochrome b6-f complex iron-sulfur subunit (Synechococcus sp. (strain JA-3-3Ab) (Cyanobacteria bacterium Yellowstone A-Prime)).